Here is a 168-residue protein sequence, read N- to C-terminus: Small ribosomal subunit protein bS6 (168 aa).

A disordered region spans residues 103–168; sequence RQAIAEEKEK…AAADKSDDNA (66 aa). A compositionally biased stretch (basic and acidic residues) spans 106-115; the sequence is IAEEKEKKAE. The span at 116-125 shows a compositional bias: low complexity; it reads GQAAADAAPA.

The protein belongs to the bacterial ribosomal protein bS6 family.

Binds together with bS18 to 16S ribosomal RNA. The protein is Small ribosomal subunit protein bS6 of Desulfosudis oleivorans (strain DSM 6200 / JCM 39069 / Hxd3) (Desulfococcus oleovorans).